Here is a 213-residue protein sequence, read N- to C-terminus: Thymidylate kinase (213 aa).

10–17 (GLEGAGKT) provides a ligand contact to ATP.

It belongs to the thymidylate kinase family.

It carries out the reaction dTMP + ATP = dTDP + ADP. Functionally, phosphorylation of dTMP to form dTDP in both de novo and salvage pathways of dTTP synthesis. The protein is Thymidylate kinase of Escherichia fergusonii (strain ATCC 35469 / DSM 13698 / CCUG 18766 / IAM 14443 / JCM 21226 / LMG 7866 / NBRC 102419 / NCTC 12128 / CDC 0568-73).